The sequence spans 731 residues: 1,4-alpha-glucan branching enzyme GlgB (731 aa).

The active-site Nucleophile is Asp-412. The active-site Proton donor is the Glu-465.

This sequence belongs to the glycosyl hydrolase 13 family. GlgB subfamily. Monomer.

It catalyses the reaction Transfers a segment of a (1-&gt;4)-alpha-D-glucan chain to a primary hydroxy group in a similar glucan chain.. It functions in the pathway glycan biosynthesis; glycogen biosynthesis. Its function is as follows. Catalyzes the formation of the alpha-1,6-glucosidic linkages in glycogen by scission of a 1,4-alpha-linked oligosaccharide from growing alpha-1,4-glucan chains and the subsequent attachment of the oligosaccharide to the alpha-1,6 position. The chain is 1,4-alpha-glucan branching enzyme GlgB from Bordetella bronchiseptica (strain ATCC BAA-588 / NCTC 13252 / RB50) (Alcaligenes bronchisepticus).